The primary structure comprises 988 residues: Echinoderm microtubule-associated protein-like 4 (988 aa).

The residue at position 1 (Met1) is an N-acetylmethionine. Residues 1 to 260 form a microtubule-binding region; it reads MDGFAGSLDD…IPSDVDNYDD (260 aa). Ser7, Ser13, Ser16, Ser61, and Ser79 each carry phosphoserine. Residues 14–63 are a coiled coil; sequence AASTSDVQDRLSALESRVQQQEDEITVLKAALADVLRRLAISEDHVASVK. At Thr96 the chain carries Phosphothreonine. The tract at residues 106–194 is disordered; the sequence is TLSSAAKSGT…WENSDDSRNK (89 aa). Positions 114–134 are enriched in basic and acidic residues; it reads GTEKKKEKPQGQREKKEDSHS. Ser134 carries the post-translational modification Phosphoserine; by NEK7. Positions 137–155 are enriched in low complexity; that stretch reads QSPQIRASPSPQPSSQPLQ. Ser144 is subject to Phosphoserine; by NEK6. Ser146 bears the Phosphoserine; by NEK7 mark. Residues 156 to 168 are compositionally biased toward polar residues; it reads INRQTPESKSSAP. Ser171 carries the post-translational modification Phosphoserine. Residues 176 to 193 show a composition bias toward basic and acidic residues; it reads PTAEKSHNSWENSDDSRN. Ser200 is subject to Phosphoserine. Thr201 carries the phosphothreonine modification. Tyr237 is modified (phosphotyrosine). Phosphothreonine is present on Thr248. 13 WD repeats span residues 270–308, 312–359, 367–407, 414–449, 456–495, 511–549, 554–590, 593–632, 636–673, 679–715, 722–761, 771–829, and 836–875; these read LKLE…LFNY, TQRH…VWDS, VIGL…VWDW, AEIK…FWTW, RKQG…IWSK, QINR…LWDH, EREI…LRGT, DGFQ…MWNS, RLEW…VLDA, VSIH…LYTV, YSRY…YWDI, RSDC…LFQY, and APSH…QWKL. At Thr620 the chain carries Phosphothreonine; by NEK6 and NEK7. Residues 887–988 form a disordered region; that stretch reads ITDASVTKTP…EEERGITPLC (102 aa). Residues 890–904 are compositionally biased toward polar residues; it reads ASVTKTPASSSETAR. Phosphoserine occurs at positions 906, 908, and 914. Positions 927–939 are enriched in polar residues; sequence MGSSPTLVENSLE. Positions 944–953 are enriched in acidic residues; that stretch reads PSEEQSEWGS.

The protein belongs to the WD repeat EMAP family. As to quaternary structure, homotrimer; self-association is mediated by the N-terminal coiled coil. Interacts (via WD repeats) with NUDC. Interacts with alpha- and beta-tubulin during mitosis. Phosphorylated during mitosis. Phosphorylation at Ser-144 and Ser-146 promotes its dissociation from microtubules during mitosis which is required for efficient chromosome congression.

Its subcellular location is the cytoplasm. It is found in the cytoskeleton. The protein localises to the spindle. The protein resides in the microtubule organizing center. It localises to the midbody. Essential for the stability of microtubules (MTs). Essential for the formation of MTs. Required for the organization of the mitotic spindle and for the proper attachment of kinetochores to MTs. Promotes the recruitment of NUDC to the mitotic spindle for mitotic progression. The polypeptide is Echinoderm microtubule-associated protein-like 4 (Eml4) (Mus musculus (Mouse)).